The following is a 796-amino-acid chain: Protein translocase subunit SecA 2 (796 aa).

ATP is bound by residues glutamine 84, 102-106 (GEGKT), and aspartate 496.

Belongs to the SecA family. As to quaternary structure, monomer and homodimer. Part of the essential Sec protein translocation apparatus which comprises SecA, SecYEG and auxiliary proteins SecDF. Other proteins may also be involved.

Its subcellular location is the cell membrane. The protein resides in the cytoplasm. It catalyses the reaction ATP + H2O + cellular proteinSide 1 = ADP + phosphate + cellular proteinSide 2.. Its function is as follows. Part of the Sec protein translocase complex. Interacts with the SecYEG preprotein conducting channel. Has a central role in coupling the hydrolysis of ATP to the transfer of proteins into and across the cell membrane, serving as an ATP-driven molecular motor driving the stepwise translocation of polypeptide chains across the membrane. The protein is Protein translocase subunit SecA 2 of Staphylococcus epidermidis (strain ATCC 35984 / DSM 28319 / BCRC 17069 / CCUG 31568 / BM 3577 / RP62A).